The sequence spans 228 residues: 7-cyano-7-deazaguanine synthase (228 aa).

ATP is bound at residue tyrosine 9–methionine 19. Zn(2+) contacts are provided by cysteine 189, cysteine 199, cysteine 202, and cysteine 205.

It belongs to the QueC family. Zn(2+) serves as cofactor.

The enzyme catalyses 7-carboxy-7-deazaguanine + NH4(+) + ATP = 7-cyano-7-deazaguanine + ADP + phosphate + H2O + H(+). Its pathway is purine metabolism; 7-cyano-7-deazaguanine biosynthesis. In terms of biological role, catalyzes the ATP-dependent conversion of 7-carboxy-7-deazaguanine (CDG) to 7-cyano-7-deazaguanine (preQ(0)). This chain is 7-cyano-7-deazaguanine synthase, found in Geotalea uraniireducens (strain Rf4) (Geobacter uraniireducens).